Consider the following 254-residue polypeptide: 4-hydroxy-tetrahydrodipicolinate reductase (254 aa).

Residues 8–13 (GCSGKM), Asp35, 86–88 (CST), and 110–113 (SANM) contribute to the NAD(+) site. Residue His143 is the Proton donor/acceptor of the active site. His144 provides a ligand contact to (S)-2,3,4,5-tetrahydrodipicolinate. Lys147 functions as the Proton donor in the catalytic mechanism. (S)-2,3,4,5-tetrahydrodipicolinate is bound at residue 153–154 (GT).

Belongs to the DapB family.

The protein localises to the cytoplasm. It carries out the reaction (S)-2,3,4,5-tetrahydrodipicolinate + NAD(+) + H2O = (2S,4S)-4-hydroxy-2,3,4,5-tetrahydrodipicolinate + NADH + H(+). It catalyses the reaction (S)-2,3,4,5-tetrahydrodipicolinate + NADP(+) + H2O = (2S,4S)-4-hydroxy-2,3,4,5-tetrahydrodipicolinate + NADPH + H(+). The protein operates within amino-acid biosynthesis; L-lysine biosynthesis via DAP pathway; (S)-tetrahydrodipicolinate from L-aspartate: step 4/4. Functionally, catalyzes the conversion of 4-hydroxy-tetrahydrodipicolinate (HTPA) to tetrahydrodipicolinate. The chain is 4-hydroxy-tetrahydrodipicolinate reductase from Clostridium perfringens (strain 13 / Type A).